Consider the following 358-residue polypeptide: Peptide chain release factor 1 (358 aa).

An N5-methylglutamine modification is found at glutamine 233.

This sequence belongs to the prokaryotic/mitochondrial release factor family. In terms of processing, methylated by PrmC. Methylation increases the termination efficiency of RF1.

It localises to the cytoplasm. Its function is as follows. Peptide chain release factor 1 directs the termination of translation in response to the peptide chain termination codons UAG and UAA. This is Peptide chain release factor 1 from Clostridium botulinum (strain 657 / Type Ba4).